The following is a 1573-amino-acid chain: Pentafunctional AROM polypeptide 1 (1573 aa).

Residues Met1–Asn380 are 3-dehydroquinate synthase. NAD(+)-binding positions include Asp44–Asn46, Glu81–Lys84, Gly112–Val114, and Asp117. A 7-phospho-2-dehydro-3-deoxy-D-arabino-heptonate-binding site is contributed by Arg128. Thr137–Thr138 is an NAD(+) binding site. 7-phospho-2-dehydro-3-deoxy-D-arabino-heptonate contacts are provided by Asp144 and Lys150. Residue Lys159 participates in NAD(+) binding. Residue Asn160 coordinates 7-phospho-2-dehydro-3-deoxy-D-arabino-heptonate. Residues Phe177 to Thr180 and Asn188 each bind NAD(+). Glu192 is a binding site for Zn(2+). Residues Glu192 to Lys195 and Lys246 contribute to the 7-phospho-2-dehydro-3-deoxy-D-arabino-heptonate site. Glu256 acts as the Proton acceptor; for 3-dehydroquinate synthase activity in catalysis. Residues Arg260–Asn264 and His267 each bind 7-phospho-2-dehydro-3-deoxy-D-arabino-heptonate. His267 is a Zn(2+) binding site. His271 acts as the Proton acceptor; for 3-dehydroquinate synthase activity in catalysis. 7-phospho-2-dehydro-3-deoxy-D-arabino-heptonate is bound by residues His283 and Lys352. A Zn(2+)-binding site is contributed by His283. The EPSP synthase stretch occupies residues Val393–Val838. Cys820 functions as the For EPSP synthase activity in the catalytic mechanism. The tract at residues Asp859 to Ser1051 is shikimate kinase. Position 866 to 873 (Gly866 to Thr873) interacts with ATP. The segment at Leu1052–Glu1273 is 3-dehydroquinase. The active-site Proton acceptor; for 3-dehydroquinate dehydratase activity is His1175. The Schiff-base intermediate with substrate; for 3-dehydroquinate dehydratase activity role is filled by Lys1203. The interval Ala1286–Lys1573 is shikimate dehydrogenase.

It in the N-terminal section; belongs to the sugar phosphate cyclases superfamily. Dehydroquinate synthase family. The protein in the 2nd section; belongs to the EPSP synthase family. This sequence in the 3rd section; belongs to the shikimate kinase family. In the 4th section; belongs to the type-I 3-dehydroquinase family. It in the C-terminal section; belongs to the shikimate dehydrogenase family. As to quaternary structure, homodimer. The cofactor is Zn(2+).

Its subcellular location is the cytoplasm. The enzyme catalyses 7-phospho-2-dehydro-3-deoxy-D-arabino-heptonate = 3-dehydroquinate + phosphate. It catalyses the reaction 3-dehydroquinate = 3-dehydroshikimate + H2O. The catalysed reaction is shikimate + NADP(+) = 3-dehydroshikimate + NADPH + H(+). It carries out the reaction shikimate + ATP = 3-phosphoshikimate + ADP + H(+). The enzyme catalyses 3-phosphoshikimate + phosphoenolpyruvate = 5-O-(1-carboxyvinyl)-3-phosphoshikimate + phosphate. Its pathway is metabolic intermediate biosynthesis; chorismate biosynthesis; chorismate from D-erythrose 4-phosphate and phosphoenolpyruvate: step 2/7. It functions in the pathway metabolic intermediate biosynthesis; chorismate biosynthesis; chorismate from D-erythrose 4-phosphate and phosphoenolpyruvate: step 3/7. It participates in metabolic intermediate biosynthesis; chorismate biosynthesis; chorismate from D-erythrose 4-phosphate and phosphoenolpyruvate: step 4/7. The protein operates within metabolic intermediate biosynthesis; chorismate biosynthesis; chorismate from D-erythrose 4-phosphate and phosphoenolpyruvate: step 5/7. Its pathway is metabolic intermediate biosynthesis; chorismate biosynthesis; chorismate from D-erythrose 4-phosphate and phosphoenolpyruvate: step 6/7. In terms of biological role, the AROM polypeptide catalyzes 5 consecutive enzymatic reactions in prechorismate polyaromatic amino acid biosynthesis. The polypeptide is Pentafunctional AROM polypeptide 1 (Talaromyces marneffei (strain ATCC 18224 / CBS 334.59 / QM 7333) (Penicillium marneffei)).